Reading from the N-terminus, the 264-residue chain is LIMR family protein SELMODRAFT_416716 (264 aa).

The next 4 helical transmembrane spans lie at 23 to 43, 96 to 116, 194 to 214, and 225 to 245; these read VVIL…VIGY, ILFT…LIFA, IIWL…FPFL, and WGLL…MSVI.

This sequence belongs to the LIMR family.

It localises to the membrane. In Selaginella moellendorffii (Spikemoss), this protein is LIMR family protein SELMODRAFT_416716.